The sequence spans 305 residues: Ribonuclease BN (305 aa).

Residues His64, His66, Asp68, His69, His141, Asp212, and His270 each coordinate Zn(2+). Asp68 functions as the Proton acceptor in the catalytic mechanism.

Belongs to the RNase Z family. RNase BN subfamily. Homodimer. It depends on Zn(2+) as a cofactor.

Its function is as follows. Zinc phosphodiesterase, which has both exoribonuclease and endoribonuclease activities. The chain is Ribonuclease BN from Escherichia coli O127:H6 (strain E2348/69 / EPEC).